The chain runs to 394 residues: Putative gustatory receptor 22a (394 aa).

Topologically, residues 1 to 16 (MSQPKRIHRICKGLAR) are cytoplasmic. A helical transmembrane segment spans residues 17–37 (FTIRATLYGSWVLGLFPFTFD). The Extracellular portion of the chain corresponds to 38–47 (SRKRRLNRSK). Asn44 carries an N-linked (GlcNAc...) asparagine glycan. A helical transmembrane segment spans residues 48–68 (WLLAYGLVLNLTLLVLSMLPS). Over 69–148 (TDDHNSVKVE…HTFNRYVIEK (80 aa)) the chain is Cytoplasmic. A helical transmembrane segment spans residues 149 to 169 (GLVIILEIGSSLVLYFGIPNS). A topological domain (extracellular) is located at residue Lys170. A helical transmembrane segment spans residues 171 to 191 (IVVYEAVCIYIVQLEVLMVVM). At 192-256 (HFHLAVIYIY…TAIYDIQVTL (65 aa)) the chain is on the cytoplasmic side. Residues 257–277 (FMATLFSVNIIVGHVLVICWI) form a helical membrane-spanning segment. Asn278 carries an N-linked (GlcNAc...) asparagine glycan. At 278–281 (NITR) the chain is on the extracellular side. A helical membrane pass occupies residues 282 to 302 (FSLLVIFLLFPQALIINFWDL). At 303–361 (WQGIAFCDLAESTGKKTSMILKLFNDMENMDQETERRVTEFTLFCSHRRLKVCHLGLLD) the chain is on the cytoplasmic side. Residues 362-382 (INYEMGFRMIITNILYVVFLV) traverse the membrane as a helical segment. Over 383–394 (QFDYMNLKFKTD) the chain is Extracellular.

It belongs to the insect chemoreceptor superfamily. Gustatory receptor (GR) family. Gr22e subfamily. As to expression, expressed in neurons of the terminal external chemosensory organ of larvae.

It is found in the cell membrane. Its function is as follows. Probable gustatory receptor which mediates acceptance or avoidance behavior, depending on its substrates. The polypeptide is Putative gustatory receptor 22a (Gr22a) (Drosophila melanogaster (Fruit fly)).